A 337-amino-acid chain; its full sequence is Palmitoyltransferase ZDHHC15 (337 aa).

Residues 1–20 (MRRGWKMALSGGLRCCRRVL) are Cytoplasmic-facing. Residues 21–41 (SWVPVLVIVLVVLWSYYAYVF) form a helical membrane-spanning segment. Residues 42–56 (ELCLVTVLSPAEKVI) lie on the Lumenal side of the membrane. Residues 57-77 (YLILYHAIFVFFAWTYWKSIF) form a helical membrane-spanning segment. Residues 78-172 (TLPQQPNQKF…NNCIGFSNYK (95 aa)) are Cytoplasmic-facing. Residues 129–179 (RFCDRCHLIKPDRCHHCSVCAMCVLKMDHHCPWVNNCIGFSNYKFFLQFLA) form the DHHC domain. Residues cysteine 131, cysteine 134, histidine 144, cysteine 145, cysteine 148, cysteine 151, and histidine 158 each coordinate Zn(2+). The active-site S-palmitoyl cysteine intermediate is the cysteine 159. Cysteine 165 lines the Zn(2+) pocket. The chain crosses the membrane as a helical span at residues 173 to 193 (FFLQFLAYSVLYCLYIATTVF). Residues 194–210 (SYFIKYWRGELPSVRSK) are Lumenal-facing. Residues 211–234 (FHVLFLLFVACMFFVSLVILFGYH) form a helical membrane-spanning segment. Residues 235–337 (CWLVSRNKTT…SSSLAVESET (103 aa)) are Cytoplasmic-facing. The segment at 293–337 (HSFPMRSMNESQNPLLANEEPWEDNEDDSRDYPEGSSSLAVESET) is disordered. Residues 312 to 321 (EPWEDNEDDS) show a composition bias toward acidic residues. Over residues 327-337 (GSSSLAVESET) the composition is skewed to polar residues.

Belongs to the DHHC palmitoyltransferase family. Post-translationally, autopalmitoylated (in vitro). In terms of tissue distribution, expressed mainly in brain.

The protein resides in the golgi apparatus membrane. It localises to the postsynaptic density. It carries out the reaction L-cysteinyl-[protein] + hexadecanoyl-CoA = S-hexadecanoyl-L-cysteinyl-[protein] + CoA. The enzyme catalyses L-cysteinyl-[protein] + tetradecanoyl-CoA = S-tetradecanoyl-L-cysteinyl-[protein] + CoA. The catalysed reaction is L-cysteinyl-[protein] + octadecanoyl-CoA = S-octadecanoyl-L-cysteinyl-[protein] + CoA. Inhibited by 2-bromopalmitate. In terms of biological role, palmitoyltransferase that catalyzes the addition of palmitate onto various protein substrates. Has no stringent fatty acid selectivity and in addition to palmitate can also transfer onto target proteins myristate from tetradecanoyl-CoA and stearate from octadecanoyl-CoA. Palmitoylates IGF2R and SORT1, promoting their partitioning to an endosomal membrane subdomain where they can interact with the retromer cargo-selective complex. Thereby, regulates retrograde transport from endosomes to the Golgi apparatus of these lysosomal sorting receptors and plays a role in trafficking of lysosomal proteins. In the nervous system, catalyzes the palmitoylation of DLG4/PSD95 and regulates its synaptic clustering and function in synaptogenesis. Could be involved in the differentiation of dopaminergic neurons and the development of the diencephalon. Could also catalyze the palmitoylation of GAP43. Could also palmitoylate DNAJC5 and regulate its localization to the Golgi membrane. Could also palmitoylate FYN as shown in vitro. May palmitoylate CALHM3 subunit of gustatory voltage-gated ion channels and modulate channel gating and kinetics. The chain is Palmitoyltransferase ZDHHC15 from Mus musculus (Mouse).